Consider the following 716-residue polypeptide: Fatty acid oxidation complex subunit alpha (716 aa).

The segment at 1–189 is enoyl-CoA hydratase/isomerase; it reads MIYQSPTIQV…KVGAVDAVVA (189 aa). Aspartate 296 contacts substrate. The segment at 311–716 is 3-hydroxyacyl-CoA dehydrogenase; that stretch reads KEVNNAAVLG…AANNGSYYQA (406 aa). NAD(+) contacts are provided by residues methionine 324, aspartate 343, 400 to 402, lysine 407, and serine 429; that span reads VVE. Histidine 450 functions as the For 3-hydroxyacyl-CoA dehydrogenase activity in the catalytic mechanism. NAD(+) is bound at residue asparagine 453. Substrate is bound by residues asparagine 500 and tyrosine 660.

In the N-terminal section; belongs to the enoyl-CoA hydratase/isomerase family. The protein in the C-terminal section; belongs to the 3-hydroxyacyl-CoA dehydrogenase family. As to quaternary structure, heterotetramer of two alpha chains (FadB) and two beta chains (FadA).

The catalysed reaction is a (3S)-3-hydroxyacyl-CoA + NAD(+) = a 3-oxoacyl-CoA + NADH + H(+). It carries out the reaction a (3S)-3-hydroxyacyl-CoA = a (2E)-enoyl-CoA + H2O. It catalyses the reaction a 4-saturated-(3S)-3-hydroxyacyl-CoA = a (3E)-enoyl-CoA + H2O. The enzyme catalyses (3S)-3-hydroxybutanoyl-CoA = (3R)-3-hydroxybutanoyl-CoA. The catalysed reaction is a (3Z)-enoyl-CoA = a 4-saturated (2E)-enoyl-CoA. It carries out the reaction a (3E)-enoyl-CoA = a 4-saturated (2E)-enoyl-CoA. The protein operates within lipid metabolism; fatty acid beta-oxidation. In terms of biological role, involved in the aerobic and anaerobic degradation of long-chain fatty acids via beta-oxidation cycle. Catalyzes the formation of 3-oxoacyl-CoA from enoyl-CoA via L-3-hydroxyacyl-CoA. It can also use D-3-hydroxyacyl-CoA and cis-3-enoyl-CoA as substrate. This Shewanella baltica (strain OS155 / ATCC BAA-1091) protein is Fatty acid oxidation complex subunit alpha.